The primary structure comprises 451 residues: Glucose-6-phosphate isomerase (451 aa).

Residue Glu291 is the Proton donor of the active site. Active-site residues include His312 and Lys426.

The protein belongs to the GPI family.

The protein resides in the cytoplasm. It catalyses the reaction alpha-D-glucose 6-phosphate = beta-D-fructose 6-phosphate. The protein operates within carbohydrate biosynthesis; gluconeogenesis. Its pathway is carbohydrate degradation; glycolysis; D-glyceraldehyde 3-phosphate and glycerone phosphate from D-glucose: step 2/4. Functionally, catalyzes the reversible isomerization of glucose-6-phosphate to fructose-6-phosphate. The protein is Glucose-6-phosphate isomerase of Thermoanaerobacter sp. (strain X514).